The chain runs to 460 residues: A-type ATP synthase subunit B (460 aa).

This sequence belongs to the ATPase alpha/beta chains family. As to quaternary structure, has multiple subunits with at least A(3), B(3), C, D, E, F, H, I and proteolipid K(x).

It localises to the cell membrane. In terms of biological role, component of the A-type ATP synthase that produces ATP from ADP in the presence of a proton gradient across the membrane. The B chain is a regulatory subunit. This chain is A-type ATP synthase subunit B, found in Methanosarcina acetivorans (strain ATCC 35395 / DSM 2834 / JCM 12185 / C2A).